Consider the following 391-residue polypeptide: uncharacterized protein (391 aa).

A run of 12 helical transmembrane segments spans residues 7–27 (FILV…LPVI), 39–59 (AING…SPFM), 66–88 (LGFK…GFIW), 92–111 (VWVW…MLHF), 131–151 (SIYG…VPLV), 156–176 (SLPF…VFFL), 197–217 (FYQA…YGFL), 239–259 (VAII…PLGI), 269–289 (VLLV…VFPS), 292–312 (VIGG…TLGI), 329–349 (LLCG…GGWY), and 356–376 (ANLF…LVLG).

It belongs to the major facilitator superfamily.

Its subcellular location is the cell membrane. This is an uncharacterized protein from Bacillus subtilis (strain 168).